A 207-amino-acid chain; its full sequence is Uridine kinase (207 aa).

13-20 is an ATP binding site; it reads GASGSGKT.

It belongs to the uridine kinase family.

It is found in the cytoplasm. The enzyme catalyses uridine + ATP = UMP + ADP + H(+). It carries out the reaction cytidine + ATP = CMP + ADP + H(+). The protein operates within pyrimidine metabolism; CTP biosynthesis via salvage pathway; CTP from cytidine: step 1/3. Its pathway is pyrimidine metabolism; UMP biosynthesis via salvage pathway; UMP from uridine: step 1/1. This Ureaplasma urealyticum serovar 10 (strain ATCC 33699 / Western) protein is Uridine kinase.